A 275-amino-acid chain; its full sequence is Phosphate import ATP-binding protein PstB 1 (275 aa).

The region spanning 22 to 261 is the ABC transporter domain; sequence LETQAVSVYY…NRTEKIFNSP (240 aa). 54 to 61 contributes to the ATP binding site; that stretch reads GPSGCGKS.

Belongs to the ABC transporter superfamily. Phosphate importer (TC 3.A.1.7) family. As to quaternary structure, the complex is composed of two ATP-binding proteins (PstB), two transmembrane proteins (PstC and PstA) and a solute-binding protein (PstS).

The protein localises to the cell inner membrane. It catalyses the reaction phosphate(out) + ATP + H2O = ADP + 2 phosphate(in) + H(+). Part of the ABC transporter complex PstSACB involved in phosphate import. Responsible for energy coupling to the transport system. The sequence is that of Phosphate import ATP-binding protein PstB 1 from Synechococcus sp. (strain JA-2-3B'a(2-13)) (Cyanobacteria bacterium Yellowstone B-Prime).